The primary structure comprises 243 residues: Small ribosomal subunit protein uS3 (243 aa).

Positions 39–107 (MRKFVMSELK…ETHLNIVEVR (69 aa)) constitute a KH type-2 domain. The interval 214-243 (ASERRAMEGDAQGPASRDRDRDRDRRRDNA) is disordered. Residues 229–243 (SRDRDRDRDRRRDNA) are compositionally biased toward basic and acidic residues.

It belongs to the universal ribosomal protein uS3 family. Part of the 30S ribosomal subunit. Forms a tight complex with proteins S10 and S14.

In terms of biological role, binds the lower part of the 30S subunit head. Binds mRNA in the 70S ribosome, positioning it for translation. The chain is Small ribosomal subunit protein uS3 from Rhizobium leguminosarum bv. trifolii (strain WSM2304).